The following is a 348-amino-acid chain: Rhodopsin (348 aa).

N-acetylmethionine is present on Met1. The Extracellular portion of the chain corresponds to 1-36; the sequence is MNGTEGPNFYVPFSNKTGVVRSPFEYPQYYLAEPWQ. Residues Asn2 and Asn15 are each glycosylated (N-linked (GlcNAc...) asparagine). Residues 37–61 traverse the membrane as a helical segment; sequence FSMLAAYMFLLIVLGFPINFLTLYV. Topologically, residues 62 to 73 are cytoplasmic; it reads TVQHKKLRTPLN. The chain crosses the membrane as a helical span at residues 74–96; that stretch reads YILLNLAVADLFMVFGGFTTTLY. Over 97-110 the chain is Extracellular; the sequence is TSLHGYFVFGPTGC. Cys110 and Cys187 are disulfide-bonded. The helical transmembrane segment at 111-133 threads the bilayer; that stretch reads NVEGFFATLGGEIALWSLVVLAI. The 'Ionic lock' involved in activated form stabilization signature appears at 134–136; it reads ERY. At 134–152 the chain is on the cytoplasmic side; sequence ERYVVVCKPMSNFRFGENH. Residues 153–173 traverse the membrane as a helical segment; that stretch reads AIMGVAFTWVMALACAAPPLA. Over 174–202 the chain is Extracellular; that stretch reads GWSRYIPEGMQCSCGIDYYTLKPEVNNES. Glu201 provides a ligand contact to Zn(2+). The helical transmembrane segment at 203 to 224 threads the bilayer; that stretch reads FVIYMFVVHFTIPMIVIFFCYG. The Cytoplasmic portion of the chain corresponds to 225 to 252; the sequence is QLVFTVKEAAAQQQESATTQKAEKEVTR. Residues 253–274 form a helical membrane-spanning segment; the sequence is MVIIMVIAFLICWVPYASVAFY. Residues 275-286 are Extracellular-facing; that stretch reads IFTHQGSNFGPI. Gln279 is a binding site for Zn(2+). Residues 287–308 traverse the membrane as a helical segment; the sequence is FMTLPAFFAKSASIYNPVIYIM. Lys296 carries the N6-(retinylidene)lysine modification. At 309–348 the chain is on the cytoplasmic side; sequence MNKQFRNCMLTTICCGKNPFAEEEGATTVSKTETSQVAPA. Residues Cys322 and Cys323 are each lipidated (S-palmitoyl cysteine). An interaction with SAG region spans residues 330–348; the sequence is EEEGATTVSKTETSQVAPA. 2 positions are modified to phosphothreonine: Thr335 and Thr336. Position 338 is a phosphoserine (Ser338). A phosphothreonine mark is found at Thr340 and Thr342. Position 343 is a phosphoserine (Ser343).

The protein belongs to the G-protein coupled receptor 1 family. Opsin subfamily. As to quaternary structure, homodimer. May form a complex composed of RHO, GRK1 and RCVRN in a Ca(2+)-dependent manner; RCVRN prevents the interaction between GRK1 and RHO. Interacts with GRK1. Interacts (phosphorylated form) with SAG. Interacts with GNAT1. Interacts with GNAT3. SAG and G-proteins compete for a common binding site. Interacts with PRCD; the interaction promotes PRCD stability. Forms a complex with ASAP1 and ARF4. Forms a complex with ASAP1, RAB11A, Rabin8/RAB3IP, ARF4 and RAB11FIP3; the complex regulates Golgi-to-cilia rhodopsin/RHO transport in photoreceptors. Phosphorylated on some or all of the serine and threonine residues present in the C-terminal region. In terms of processing, contains one covalently linked retinal chromophore. Upon light absorption, the covalently bound 11-cis-retinal is converted to all-trans-retinal. After hydrolysis of the Schiff base and release of the covalently bound all-trans-retinal, active rhodopsin is regenerated by binding of a fresh molecule of 11-cis-retinal.

The protein localises to the membrane. It is found in the cell projection. It localises to the cilium. Its subcellular location is the photoreceptor outer segment. Functionally, photoreceptor required for image-forming vision at low light intensity. Required for photoreceptor cell viability after birth. Light-induced isomerization of 11-cis to all-trans retinal triggers a conformational change that activates signaling via G-proteins. Subsequent receptor phosphorylation mediates displacement of the bound G-protein alpha subunit by the arrestin SAG and terminates signaling. In Trichechus manatus (Caribbean manatee), this protein is Rhodopsin (RHO).